A 242-amino-acid polypeptide reads, in one-letter code: Small ribosomal subunit protein uS2 (242 aa).

This sequence belongs to the universal ribosomal protein uS2 family.

This chain is Small ribosomal subunit protein uS2, found in Vibrio parahaemolyticus serotype O3:K6 (strain RIMD 2210633).